The chain runs to 231 residues: Casein kinase II subunit beta (231 aa).

Belongs to the casein kinase 2 subunit beta family. In terms of assembly, tetramer composed of two alpha chains, one beta chain and one beta' chain. In terms of processing, phosphorylated by alpha subunit.

Its function is as follows. Regulatory subunit of casein kinase II/CK2. As part of the kinase complex regulates the basal catalytic activity of the alpha subunit a constitutively active serine/threonine-protein kinase that phosphorylates a large number of substrates containing acidic residues C-terminal to the phosphorylated serine or threonine. The chain is Casein kinase II subunit beta from Schizosaccharomyces pombe (strain 972 / ATCC 24843) (Fission yeast).